The primary structure comprises 106 residues: UPF0091 protein RC0354 (106 aa).

The protein belongs to the UPF0091 family.

This is UPF0091 protein RC0354 from Rickettsia conorii (strain ATCC VR-613 / Malish 7).